Here is a 576-residue protein sequence, read N- to C-terminus: MDSVAFKDVSVSFSQEEWALLAPSQKKLYRDVMQETFKNLASIGEKWEDPNVEDQHRNQGRNLRSHMGERLCEGKEGSQCAETFSPNLSVTKKTAGVKPYECTICGKVFMRLSSLTRHMRSHTGYELFEKPYKCKECGKAFSYLKSFQRHERSHTGEKPYKCKQCGKTFIYHQPFQRHEQTHIGEKPYECKQCGKALSCSSSLRVHERIHTGEKPYECKQCGKAFSCSSSIRVHERTHTGEKPYACKECGKAFISHTSVLTHMITHNGDRPYKCKECGKAFIFPSFLRVHERIHTGEKPYTCKQCGKAFRCSTSIQIHERIHTGEKPYKCKECGKSFSARPAFRVHVRVHTGEKPYKCKECGKAFSRISYFRIHERTHTGEKPYECKKCGKTFNYPLDLQIHKRNHTGEKPYECKECAKTFISLENFRRHMITHTGEGPYKCRDCGKVFIFPSALRTHERTHTGEKPYECKQCGKAFSCSSYIRIHKRTHTGEKPYECKECGKAFIYPTSFQGHMRMHTGEKPYKCKECGKAFSLHSSFQRHTRIHNYEKPLECKQCGKAFSLSTSLKKHMRMHNR.

In terms of domain architecture, KRAB spans 4–90 (VAFKDVSVSF…AETFSPNLSV (87 aa)). 17 C2H2-type zinc fingers span residues 100-122 (YECT…MRSH), 132-154 (YKCK…ERSH), 160-182 (YKCK…EQTH), 188-210 (YECK…ERIH), 216-238 (YECK…ERTH), 244-266 (YACK…MITH), 272-294 (YKCK…ERIH), 300-322 (YTCK…ERIH), 328-350 (YKCK…VRVH), 356-378 (YKCK…ERTH), 384-406 (YECK…KRNH), 412-434 (YECK…MITH), 440-462 (YKCR…ERTH), 468-490 (YECK…KRTH), 496-518 (YECK…MRMH), 524-546 (YKCK…TRIH), and 552-574 (LECK…MRMH).

Belongs to the krueppel C2H2-type zinc-finger protein family.

The protein resides in the nucleus. May be involved in transcriptional regulation. This chain is Zinc finger protein 791 (ZNF791), found in Pongo abelii (Sumatran orangutan).